The primary structure comprises 170 residues: Urease accessory protein UreE (170 aa).

The protein belongs to the UreE family.

It localises to the cytoplasm. Its function is as follows. Involved in urease metallocenter assembly. Binds nickel. Probably functions as a nickel donor during metallocenter assembly. This is Urease accessory protein UreE from Helicobacter acinonychis (strain Sheeba).